The sequence spans 525 residues: Bifunctional purine biosynthesis protein PurH (525 aa).

The region spanning 10–156 (HRIPIRRALV…KNHPSVAIVT (147 aa)) is the MGS-like domain.

Belongs to the PurH family.

It catalyses the reaction (6R)-10-formyltetrahydrofolate + 5-amino-1-(5-phospho-beta-D-ribosyl)imidazole-4-carboxamide = 5-formamido-1-(5-phospho-D-ribosyl)imidazole-4-carboxamide + (6S)-5,6,7,8-tetrahydrofolate. The catalysed reaction is IMP + H2O = 5-formamido-1-(5-phospho-D-ribosyl)imidazole-4-carboxamide. It participates in purine metabolism; IMP biosynthesis via de novo pathway; 5-formamido-1-(5-phospho-D-ribosyl)imidazole-4-carboxamide from 5-amino-1-(5-phospho-D-ribosyl)imidazole-4-carboxamide (10-formyl THF route): step 1/1. The protein operates within purine metabolism; IMP biosynthesis via de novo pathway; IMP from 5-formamido-1-(5-phospho-D-ribosyl)imidazole-4-carboxamide: step 1/1. The polypeptide is Bifunctional purine biosynthesis protein PurH (Nocardioides sp. (strain ATCC BAA-499 / JS614)).